A 155-amino-acid polypeptide reads, in one-letter code: Transmembrane protein C1orf162 (155 aa).

Positions 1–28 (MGGNGSTCKPDTERQGTLSTAAPTTSPA) are disordered. Positions 19-28 (STAAPTTSPA) are enriched in low complexity. The helical transmembrane segment at 41 to 61 (ILAFCAGVLLTLLLIAFIFLI) threads the bilayer. Positions 92–114 (ADHSKPQAPDPHSDPPAKLSSIP) are disordered. At serine 140 the chain carries Phosphoserine.

It localises to the membrane. The sequence is that of Transmembrane protein C1orf162 (C1orf162) from Homo sapiens (Human).